A 109-amino-acid polypeptide reads, in one-letter code: MKKTYRVKSDKDFQMIFSRGKNVANRKFVIYYLEKEQKHFRVGISVSKKLGNAVVRNAIKRKIRHVLLSQKTALQDYDFVVIARKGVEELNYQALEKNLIHVLKIAGLI.

This sequence belongs to the RnpA family. Consists of a catalytic RNA component (M1 or rnpB) and a protein subunit.

The catalysed reaction is Endonucleolytic cleavage of RNA, removing 5'-extranucleotides from tRNA precursor.. In terms of biological role, RNaseP catalyzes the removal of the 5'-leader sequence from pre-tRNA to produce the mature 5'-terminus. It can also cleave other RNA substrates such as 4.5S RNA. The protein component plays an auxiliary but essential role in vivo by binding to the 5'-leader sequence and broadening the substrate specificity of the ribozyme. The protein is Ribonuclease P protein component of Streptococcus agalactiae serotype III (strain NEM316).